Consider the following 291-residue polypeptide: MASLKELKGRIVSVKSTQKITKAKKMVAAAKLRKAQAAAEAARPYAERLEGVVASLASKVGASDSAPKLLSGTGKSDTHLLVVLNSDRGLAGAFNSNIVKAARDKALELQSQGKKVLFYLVGRKGRPVIARLFPGQIIEQYDTTGIRDIGFDQASEISARVMELYEAGAFDVAHLFYSKFRSALLQIATGQQMIPVPPPAEAPASSGAAVEYEPGEEEILADLLPRNVTIQIFKGLLENAASEQGASMTAMDNATRNAGELINKLTIIYNRTRQAAITTELIEIIAGAEAL.

This sequence belongs to the ATPase gamma chain family. As to quaternary structure, F-type ATPases have 2 components, CF(1) - the catalytic core - and CF(0) - the membrane proton channel. CF(1) has five subunits: alpha(3), beta(3), gamma(1), delta(1), epsilon(1). CF(0) has three main subunits: a, b and c.

The protein localises to the cell inner membrane. Functionally, produces ATP from ADP in the presence of a proton gradient across the membrane. The gamma chain is believed to be important in regulating ATPase activity and the flow of protons through the CF(0) complex. In Sphingopyxis alaskensis (strain DSM 13593 / LMG 18877 / RB2256) (Sphingomonas alaskensis), this protein is ATP synthase gamma chain.